The chain runs to 185 residues: Ribosome-recycling factor (185 aa).

The protein belongs to the RRF family.

The protein resides in the cytoplasm. Responsible for the release of ribosomes from messenger RNA at the termination of protein biosynthesis. May increase the efficiency of translation by recycling ribosomes from one round of translation to another. This is Ribosome-recycling factor from Tolumonas auensis (strain DSM 9187 / NBRC 110442 / TA 4).